Here is a 479-residue protein sequence, read N- to C-terminus: Ribulose bisphosphate carboxylase large chain (479 aa).

A propeptide spanning residues 1–2 is cleaved from the precursor; the sequence is MS. Residues Asn123 and Thr173 each coordinate substrate. Lys175 acts as the Proton acceptor in catalysis. Lys177 contacts substrate. Mg(2+)-binding residues include Lys201, Asp203, and Glu204. Lys201 bears the N6-carboxylysine mark. At Ser208 the chain carries Phosphoserine. Catalysis depends on His294, which acts as the Proton acceptor. Residues Arg295 and His327 each contribute to the substrate site. Thr330 is subject to Phosphothreonine. Ser379 is a substrate binding site.

The protein belongs to the RuBisCO large chain family. Type I subfamily. In terms of assembly, heterohexadecamer of 8 large chains and 8 small chains; disulfide-linked. The disulfide link is formed within the large subunit homodimers. Mg(2+) is required as a cofactor. Post-translationally, the disulfide bond which can form in the large chain dimeric partners within the hexadecamer appears to be associated with oxidative stress and protein turnover.

It localises to the plastid. It is found in the chloroplast. It carries out the reaction 2 (2R)-3-phosphoglycerate + 2 H(+) = D-ribulose 1,5-bisphosphate + CO2 + H2O. The catalysed reaction is D-ribulose 1,5-bisphosphate + O2 = 2-phosphoglycolate + (2R)-3-phosphoglycerate + 2 H(+). In terms of biological role, ruBisCO catalyzes two reactions: the carboxylation of D-ribulose 1,5-bisphosphate, the primary event in carbon dioxide fixation, as well as the oxidative fragmentation of the pentose substrate in the photorespiration process. Both reactions occur simultaneously and in competition at the same active site. This is Ribulose bisphosphate carboxylase large chain from Nasturtium officinale (Watercress).